A 298-amino-acid polypeptide reads, in one-letter code: Protoheme IX farnesyltransferase (298 aa).

9 helical membrane-spanning segments follow: residues 28–48 (VVAL…EELV), 50–70 (LKVL…AAAI), 95–117 (LSPA…TLYA), 121–138 (PLTA…AVVY), 149–169 (NIVI…TSVT), 176–196 (AVLL…ALAV), 222–242 (CIFL…LIGM), 243–263 (TGMI…AYAW), and 274–294 (AFNM…ILLV).

This sequence belongs to the UbiA prenyltransferase family. Protoheme IX farnesyltransferase subfamily.

Its subcellular location is the cell inner membrane. It carries out the reaction heme b + (2E,6E)-farnesyl diphosphate + H2O = Fe(II)-heme o + diphosphate. It functions in the pathway porphyrin-containing compound metabolism; heme O biosynthesis; heme O from protoheme: step 1/1. Converts heme B (protoheme IX) to heme O by substitution of the vinyl group on carbon 2 of heme B porphyrin ring with a hydroxyethyl farnesyl side group. This chain is Protoheme IX farnesyltransferase, found in Idiomarina loihiensis (strain ATCC BAA-735 / DSM 15497 / L2-TR).